The primary structure comprises 448 residues: Receptor homology region, transmembrane domain- and RING domain-containing protein 2 (448 aa).

A signal peptide spans 1 to 20; that stretch reads MNRALVLLLYVCTVSCLASS. Topologically, residues 21-163 are lumenal; that stretch reads KVILMRNNIT…IPSFENSAWS (143 aa). Asn28 and Asn74 each carry an N-linked (GlcNAc...) asparagine glycan. The PA domain maps to 60-144; sequence DACQNLMNKP…ETGEVLKEYA (85 aa). A disulfide bond links Cys62 and Cys87. Residues 164–184 traverse the membrane as a helical segment; it reads IMAVSFISLLAMSAVLATCFF. Over 185 to 448 the chain is Cytoplasmic; it reads VRRHRIRRRT…YASANSLPDC (264 aa). The RING-type; atypical zinc finger occupies 232-274; it reads CAICLEDYTVGDKLRLLPCCHKFHAACVDSWLTSWRTFCPVCK. The span at 344–378 shows a compositional bias: low complexity; sequence QSSSNRRSPPISVSRSSVDLRQQAASPSPSPSQRS. Disordered regions lie at residues 344 to 380 and 402 to 424; these read QSSS…RSYI and MSPY…NYPL. Residues 408–423 are compositionally biased toward polar residues; the sequence is SPSNASPAMAGSSNYP.

The protein resides in the protein storage vacuole membrane. Its subcellular location is the golgi apparatus membrane. In terms of biological role, involved in the trafficking of vacuolar proteins. May function as a sorting receptor for protein trafficking to the protein storage vacuole (PSV). This is Receptor homology region, transmembrane domain- and RING domain-containing protein 2 (RMR2) from Arabidopsis thaliana (Mouse-ear cress).